Consider the following 381-residue polypeptide: 1-deoxy-D-xylulose 5-phosphate reductoisomerase (381 aa).

NADPH-binding residues include Thr10, Gly11, Ser12, Ile13, Gly36, Lys37, Asn38, and Asn120. A 1-deoxy-D-xylulose 5-phosphate-binding site is contributed by Lys121. Glu122 is a binding site for NADPH. Asp146 provides a ligand contact to Mn(2+). Ser147, Glu148, Ser172, and His195 together coordinate 1-deoxy-D-xylulose 5-phosphate. A Mn(2+)-binding site is contributed by Glu148. Gly201 contacts NADPH. 1-deoxy-D-xylulose 5-phosphate-binding residues include Ser208, Asn213, Lys214, and Glu217. A Mn(2+)-binding site is contributed by Glu217.

This sequence belongs to the DXR family. Mg(2+) is required as a cofactor. Requires Mn(2+) as cofactor.

It carries out the reaction 2-C-methyl-D-erythritol 4-phosphate + NADP(+) = 1-deoxy-D-xylulose 5-phosphate + NADPH + H(+). It functions in the pathway isoprenoid biosynthesis; isopentenyl diphosphate biosynthesis via DXP pathway; isopentenyl diphosphate from 1-deoxy-D-xylulose 5-phosphate: step 1/6. In terms of biological role, catalyzes the NADPH-dependent rearrangement and reduction of 1-deoxy-D-xylulose-5-phosphate (DXP) to 2-C-methyl-D-erythritol 4-phosphate (MEP). The chain is 1-deoxy-D-xylulose 5-phosphate reductoisomerase from Lysinibacillus sphaericus (strain C3-41).